The following is a 438-amino-acid chain: Aspartyl protease 25 (438 aa).

The first 23 residues, 1 to 23, serve as a signal peptide directing secretion; that stretch reads MAATTTIPLLLLLLAATVAAAAA. The region spanning 79-433 is the Peptidase A1 domain; the sequence is YVVRAGLGSP…DVANSRVGFA (355 aa). Aspartate 97 is an active-site residue. Cysteine 107 and cysteine 113 are joined by a disulfide. N-linked (GlcNAc...) asparagine glycosylation is found at asparagine 123, asparagine 193, and asparagine 282. The active site involves aspartate 313. An intrachain disulfide couples cysteine 352 to cysteine 394.

Belongs to the peptidase A1 family.

Anther-specific aspartic protease involved in tapetal programmed cell death (PCD). Directly regulated by the transcription factor EAT1/DTD in anthers during tapetum PCD and degeneration. This chain is Aspartyl protease 25, found in Oryza sativa subsp. japonica (Rice).